A 729-amino-acid chain; its full sequence is MFSWSYLMGLVMVATATLSLARPSYNIAEDTTLEPEDANSSGDDEDDNDGSEDFTNDNNHMRAPYWTNTEKLEKKLHAVPAANTVKFRCPAGGNPTPSMRWLKNGKEFKQEHRIGGFKVRSQHFSLIMESVVPSDEGNYTCIMENEYGSINHTYHLDVVERSPHRPILQAGLPANTTTKVGGDAEFVCKVYSDAQPHIQWIRHFELNGSKIGPDGHPYLKVLKAAGVNTTDKEIEVLYVRNVSFEDAGEYTCLAGNSTGISYHTAWLTVLPDEERELDSSSEYTEIAIYCVGGFLITCMIGTIMVCHMKGRGKKSDFSSPPAVHKLSKSLPLRRQVTVSADSSSSMNSNTPLVRITTRLSSNNDTHLLAGVSEYELPEDPKWEYPREKLTLGKPLGEGCFGQVVMAEAVGIDKDRPKDAATVAVKMLKDDATEKDLSDLVSEMEMMKMIGKHKNIINLLGACTQDGPLYVIVEYASKGNLREYLRTRRPPGMEYSFDINRIPEEQMTFKDLVSCTYQLARGMEYLASQKCIHRDLAARNVLVTETNVMKIADFGLARDINNIDYYKKTTNGRLPVKWMAPEALFDRVYTHQSDVWSFGVLMWEIFTLGGSPYPGIPVEELFKLLKEGHRMDKPGNCTNELYTMMTDCWRAVPSQRPTFKQLVEDLDRILTQTTNEEYLDLNNPLEQYSPSYPDTRSSCSSGDDSVFSPDAMPYDPCLPKSQHTNGTIKT.

The first 21 residues, 1-21 (MFSWSYLMGLVMVATATLSLA), serve as a signal peptide directing secretion. Over 22-285 (RPSYNIAEDT…ELDSSSEYTE (264 aa)) the chain is Extracellular. Residues 29-62 (EDTTLEPEDANSSGDDEDDNDGSEDFTNDNNHMR) are disordered. Residues 31–55 (TTLEPEDANSSGDDEDDNDGSEDFT) show a composition bias toward acidic residues. A glycan (N-linked (GlcNAc...) asparagine) is linked at asparagine 39. Ig-like C2-type domains are found at residues 64–157 (PYWT…YHLD) and 166–268 (PILQ…AWLT). Positions 71–88 (KLEKKLHAVPAANTVKFR) are heparin-binding. A disulfide bond links cysteine 89 and cysteine 141. N-linked (GlcNAc...) asparagine glycosylation is found at asparagine 138, asparagine 151, asparagine 175, asparagine 207, asparagine 228, asparagine 241, and asparagine 256. A disulfide bridge links cysteine 188 with cysteine 252. Residues 286-306 (IAIYCVGGFLITCMIGTIMVC) traverse the membrane as a helical segment. At 307–729 (HMKGRGKKSD…SQHTNGTIKT (423 aa)) the chain is on the cytoplasmic side. Phosphotyrosine; by autocatalysis is present on tyrosine 374. Positions 389-678 (LTLGKPLGEG…LTQTTNEEYL (290 aa)) constitute a Protein kinase domain. Residues 395–403 (LGEGCFGQV), lysine 425, 473–475 (EYA), and asparagine 479 contribute to the ATP site. Tyrosine 494 is subject to Phosphotyrosine; by autocatalysis. Aspartate 534 acts as the Proton acceptor in catalysis. A phosphotyrosine; by autocatalysis mark is found at tyrosine 564, tyrosine 565, and tyrosine 677. The disordered stretch occupies residues 683–729 (PLEQYSPSYPDTRSSCSSGDDSVFSPDAMPYDPCLPKSQHTNGTIKT). Over residues 693–707 (DTRSSCSSGDDSVFS) the composition is skewed to low complexity. Polar residues predominate over residues 720–729 (SQHTNGTIKT).

Belongs to the protein kinase superfamily. Tyr protein kinase family. Fibroblast growth factor receptor subfamily. In terms of assembly, monomer. Homodimer after ligand binding. Post-translationally, autophosphorylated. Binding of FGF family members together with heparan sulfate proteoglycan or heparin promotes receptor dimerization and autophosphorylation on tyrosine residues. Autophosphorylation occurs in trans between the two FGFR molecules present in the dimer. In terms of processing, N-glycosylated in the endoplasmic reticulum. The N-glycan chains undergo further maturation to an Endo H-resistant form in the Golgi apparatus. Ubiquitinated. FGFR2 is rapidly ubiquitinated after autophosphorylation, leading to internalization and degradation. Subject to degradation both in lysosomes and by the proteasome.

The protein localises to the cell membrane. Its subcellular location is the golgi apparatus. It localises to the cytoplasmic vesicle. It catalyses the reaction L-tyrosyl-[protein] + ATP = O-phospho-L-tyrosyl-[protein] + ADP + H(+). Present in an inactive conformation in the absence of bound ligand. Ligand binding leads to dimerization and activation by autophosphorylation on tyrosine residues. Functionally, tyrosine-protein kinase that acts as a cell-surface receptor for fibroblast growth factors and plays an essential role in the regulation of cell proliferation, differentiation, migration and apoptosis, and in the regulation of embryonic development. Required for normal embryonic patterning, limb bud development, lung morphogenesis, osteogenesis and skin development. Plays an essential role in the regulation of osteoblast differentiation, proliferation and apoptosis, and is required for normal skeleton development. Promotes cell proliferation in keratinocytes and immature osteoblasts, but promotes apoptosis in differentiated osteoblasts. Phosphorylates PLCG1, FRS2 and PAK4. Ligand binding leads to the activation of several signaling cascades. Activation of PLCG1 leads to the production of the cellular signaling molecules diacylglycerol and inositol 1,4,5-trisphosphate. Phosphorylation of FRS2 triggers recruitment of GRB2, GAB1, PIK3R1 and SOS1, and mediates activation of RAS, MAPK1/ERK2, MAPK3/ERK1 and the MAP kinase signaling pathway, as well as of the AKT1 signaling pathway. FGFR2 signaling is down-regulated by ubiquitination, internalization and degradation. Mutations that lead to constitutive kinase activation or impair normal FGFR2 maturation, internalization and degradation lead to aberrant signaling. Over-expressed FGFR2 promotes activation of STAT1. The protein is Fibroblast growth factor receptor 2 (FGFR2) of Notophthalmus viridescens (Eastern newt).